Reading from the N-terminus, the 589-residue chain is Heterogeneous nuclear ribonucleoprotein L (589 aa).

A compositionally biased stretch (basic residues) spans 1–16 (MSRRLLPRAEKRRRRL). The segment at 1 to 100 (MSRRLLPRAE…NYDDPHKTPA (100 aa)) is disordered. A compositionally biased stretch (basic and acidic residues) spans 17–27 (EQRQQPDEQRR). Over residues 38 to 54 (AGGGGGGGRYYGGGSEG) the composition is skewed to gly residues. Ser52 bears the Phosphoserine mark. Glycyl lysine isopeptide (Lys-Gly) (interchain with G-Cter in SUMO2) cross-links involve residues Lys59 and Lys62. The span at 69–90 (QHGGGGGGGGGAGAAGGGGGGE) shows a compositional bias: gly residues. Ser101 bears the Phosphoserine mark. The RRM 1 domain occupies 102–176 (PVVHIRGLID…HPAFVNYSTS (75 aa)). Lys136 participates in a covalent cross-link: Glycyl lysine isopeptide (Lys-Gly) (interchain with G-Cter in SUMO2). A Phosphoserine modification is found at Ser185. The region spanning 193-270 (SVLLFTILNP…CTLKIEYAKP (78 aa)) is the RRM 2 domain. Position 269 is an N6-acetyllysine (Lys269). Residues 284 to 301 (DYTNPNLSGQGDPGSNPN) are compositionally biased toward polar residues. The disordered stretch occupies residues 284-378 (DYTNPNLSGQ…PPPPPEYGPH (95 aa)). Residues Ser291 and Ser298 each carry the phosphoserine modification. Lys302 is covalently cross-linked (Glycyl lysine isopeptide (Lys-Gly) (interchain with G-Cter in SUMO2)). Asymmetric dimethylarginine is present on residues Arg354 and Arg358. Positions 364 to 375 (GHPPPPPPPPEY) are enriched in pro residues. Ser381 bears the Phosphoserine mark. RRM domains are found at residues 382-478 (PVLM…KDFS) and 495-583 (RIQH…LCFS). Ser544 is modified (phosphoserine; by CaMK4). Residue Lys568 forms a Glycyl lysine isopeptide (Lys-Gly) (interchain with G-Cter in SUMO2) linkage.

Identified in a IGF2BP1-dependent mRNP granule complex containing untranslated mRNAs. Interacts with HNRNPLL. Interacts with APEX1; the interaction is DNA-dependent. Component of a complex with SETD2. Interacts with ELAVL1. Part of a transcription inhibitory ribonucleoprotein complex composed at least of the circular RNA circZNF827, ZNF827 and HNRNPK. Interacts with CHD8 in an RNA-dependent manner. Post-translationally, several isoelectric forms of the L protein are probably the results of post-translational modifications. In terms of processing, phosphorylation at Ser-544 by CaMK4 enhances interaction with a CaMK4-responsive RNA element (CaRRE1), and prevents inclusion of the stress axis-regulated exon (STREX) of the KCNMA1 potassium channel transcripts upon membrane depolarization.

It localises to the nucleus. The protein resides in the nucleoplasm. It is found in the cytoplasm. Splicing factor binding to exonic or intronic sites and acting as either an activator or repressor of exon inclusion. Exhibits a binding preference for CA-rich elements. Component of the heterogeneous nuclear ribonucleoprotein (hnRNP) complexes and associated with most nascent transcripts. Associates, together with APEX1, to the negative calcium responsive element (nCaRE) B2 of the APEX2 promoter. As part of a ribonucleoprotein complex composed at least of ZNF827, HNRNPK and the circular RNA circZNF827 that nucleates the complex on chromatin, may negatively regulate the transcription of genes involved in neuronal differentiation. Regulates alternative splicing of a core group of genes involved in neuronal differentiation, likely by mediating H3K36me3-coupled transcription elongation and co-transcriptional RNA processing via interaction with CHD8. This Homo sapiens (Human) protein is Heterogeneous nuclear ribonucleoprotein L (HNRNPL).